The primary structure comprises 71 residues: Large ribosomal subunit protein bL31 (71 aa).

Zn(2+)-binding residues include Cys16, Cys18, Cys38, and Cys41.

Belongs to the bacterial ribosomal protein bL31 family. Type A subfamily. Part of the 50S ribosomal subunit. Requires Zn(2+) as cofactor.

Functionally, binds the 23S rRNA. The chain is Large ribosomal subunit protein bL31 from Chromobacterium violaceum (strain ATCC 12472 / DSM 30191 / JCM 1249 / CCUG 213 / NBRC 12614 / NCIMB 9131 / NCTC 9757 / MK).